The sequence spans 225 residues: MTSAKNVIVDTGCANLSSVKFAVERLGFEVTITDDITIIQQAEKVIFPGVGSAKHAMKNIKAKNLEAALQGLTQPVLGFCLGMQLMTESSTEGKKSSTEGNNDDNTSHIVPCLNLIPTNVEPLKAQGNRLPHMGWNTLTQVSNHPIFKGISEGDYFYFVHSFAAPISEYTIASCEYGSTFSAAIAKDNFIGCQFHPERSSALGSKIIQNFLELDSTELNQELVNL.

One can recognise a Glutamine amidotransferase type-1 domain in the interval 5–220 (KNVIVDTGCA…LELDSTELNQ (216 aa)). C80 functions as the Nucleophile in the catalytic mechanism. Residues H195 and E197 contribute to the active site.

In terms of assembly, heterodimer of HisH and HisF.

It localises to the cytoplasm. The enzyme catalyses 5-[(5-phospho-1-deoxy-D-ribulos-1-ylimino)methylamino]-1-(5-phospho-beta-D-ribosyl)imidazole-4-carboxamide + L-glutamine = D-erythro-1-(imidazol-4-yl)glycerol 3-phosphate + 5-amino-1-(5-phospho-beta-D-ribosyl)imidazole-4-carboxamide + L-glutamate + H(+). It carries out the reaction L-glutamine + H2O = L-glutamate + NH4(+). It participates in amino-acid biosynthesis; L-histidine biosynthesis; L-histidine from 5-phospho-alpha-D-ribose 1-diphosphate: step 5/9. Its function is as follows. IGPS catalyzes the conversion of PRFAR and glutamine to IGP, AICAR and glutamate. The HisH subunit catalyzes the hydrolysis of glutamine to glutamate and ammonia as part of the synthesis of IGP and AICAR. The resulting ammonia molecule is channeled to the active site of HisF. This is Imidazole glycerol phosphate synthase subunit HisH from Colwellia psychrerythraea (strain 34H / ATCC BAA-681) (Vibrio psychroerythus).